Consider the following 550-residue polypeptide: Hydroxylamine reductase (550 aa).

Positions 3, 6, 18, and 25 each coordinate [2Fe-2S] cluster. 8 residues coordinate hybrid [4Fe-2O-2S] cluster: H249, E273, C317, C405, C433, C458, E492, and K494. C405 is subject to Cysteine persulfide.

Belongs to the HCP family. The cofactor is [2Fe-2S] cluster. Hybrid [4Fe-2O-2S] cluster is required as a cofactor.

The protein resides in the cytoplasm. It catalyses the reaction A + NH4(+) + H2O = hydroxylamine + AH2 + H(+). In terms of biological role, catalyzes the reduction of hydroxylamine to form NH(3) and H(2)O. The chain is Hydroxylamine reductase from Escherichia coli O6:K15:H31 (strain 536 / UPEC).